The following is an 815-amino-acid chain: MGSDKRVSRTERSGRYGSIIDRDDRDERESRSRRRDSDYKRSSDDRRGDRYDDYRDYDSPERERERRNSDRSEDGYHSDGDYGEHDYRHDISDERESKTIMLRGLPITITESDIREMMESFEGPQPADVRLMKRKTGVSRGFAFVEFYHLQDATSWMEANQKKLVIQGKHIAMHYSNPRPKFEDWLCNKCCLNNFRKRLKCFRCGADKFDSEQEVPPGTTESVQSVDYYCDTIILRNIAPHTVVDSIMTALSPYASLAVNNIRLIKDKQTQQNRGFAFVQLSSAMDASQLLQILQSLHPPLKIDGKTIGVDFAKSARKDLVLPDGNRVSAFSVASTAIAAAQWSSTQSQSGEGGSVDYSYLQPGQDGYAQYAQYSQDYQQFYQQQAGGLESDASSASGTAVTTTSAAVVSQSPQLYNQTSNPPSSPTEEAQPSTSTSTQAPAASPTGVVPGTKYAVPDTSTYQYDESSGYYYDPTTGLYYDPNSQYYYNSLTQQYLYWDGEKETYMLAAESNSHQQTGLPPAKEGKEKKEKPKSKTAQQIAKDMERWAKSLNKQKENFKNSFQPVNSLREEERRESAAADAGFALFEKKGALAERQQLIPELVRNGDEDNPLKRGLVAAYSGDSDNEEELVERLESEEEKLADWKKMACLLCRRQFPNKDALVRHQQLSDLHKQNMDIYRRSRLSEQELEALELREREMKYRDRAAERREKYGIPEPPEPKRKKQFDAGTVNYEQPTKDGIDHSNIGNKMLQAMGWREGSGLGRKCQGITAPIEAQVRLKGAGLGAKGSAYGLSGADSYKDAVRKAMFARFTEME.

A disordered region spans residues 1–93 (MGSDKRVSRT…EHDYRHDISD (93 aa)). 5 positions are modified to phosphoserine: S18, S59, S69, S72, and S78. The region spanning 98–178 (KTIMLRGLPI…KHIAMHYSNP (81 aa)) is the RRM 1 domain. A RanBP2-type zinc finger spans residues 181 to 210 (KFEDWLCNKCCLNNFRKRLKCFRCGADKFD). The RRM 2 domain maps to 231–315 (DTIILRNIAP…KTIGVDFAKS (85 aa)). Residues 321–809 (VLPDGNRVSA…KDAVRKAMFA (489 aa)) are required for interaction with U2AF2. Polar residues predominate over residues 411–421 (QSPQLYNQTSN). 2 disordered regions span residues 411–467 (QSPQ…YDES) and 510–539 (ESNS…TAQQ). Residues 426–446 (PTEEAQPSTSTSTQAPAASPT) show a composition bias toward low complexity. S444 is subject to Phosphoserine. Residues 452–535 (TKYAVPDTST…KEKKEKPKSK (84 aa)) form a sufficient for interaction with ACIN1, PRPF8, SFRS3, SNRPB, SNRPN, SNRNP70 and SNRNP200 region. Phosphoserine occurs at positions 621 and 624. The segment at 647-672 (MACLLCRRQFPNKDALVRHQQLSDLH) adopts a C2H2-type zinc-finger fold. The G-patch domain maps to 743–789 (HSNIGNKMLQAMGWREGSGLGRKCQGITAPIEAQVRLKGAGLGAKGS).

It belongs to the RBM5/RBM10 family. Component of the spliceosome A complex (also known as the prespliceosome). Appears to dissociate from the spliceosome upon formation of the spliceosome B complex (also known as the precatalytic spliceosome), in which the heterotrimeric U4/U6.U5 snRNPs are bound. Interacts with U2AF2; this interaction is direct. Also interacts with ACIN1, PRPF8, SFRS3, SNRPB, SNRPN, SNRNP70 and SNRNP200; these interactions may be indirect.

It is found in the nucleus. Functionally, component of the spliceosome A complex. Binds to ssRNA containing the consensus sequence 5'-AGGUAA-3'. Regulates alternative splicing of a number of mRNAs. May modulate splice site pairing after recruitment of the U1 and U2 snRNPs to the 5' and 3' splice sites of the intron. May both positively and negatively regulate apoptosis by regulating the alternative splicing of several genes involved in this process, including FAS and CASP2/caspase-2. In the case of FAS, promotes production of a soluble form of FAS that inhibits apoptosis. In the case of CASP2/caspase-2, promotes production of a catalytically active form of CASP2/Caspase-2 that induces apoptosis. In Bos taurus (Bovine), this protein is RNA-binding protein 5 (RBM5).